Reading from the N-terminus, the 421-residue chain is MTINYHKEIKTSHTWKFFVLLFRWKGSIWKAIYMETIIFLICYGIISVVYRTAMSEPSQRTFESVIRYCDKRLSFIPLEFVLGFFVTIVVDRWTKLWRTVGFIDDVCLLANLYVRGTSEKAIIYRRNIARYCALTQLLVFRDVSMRTRRRFPTMETVVAAGFMSKDELDLYNSYTTKNNSRLGKKYWIPANWALCMTYKARKDGYIESDYFKAQMEGEIRTWRTNIEWVCNYDWVPLPLMYPQLVCLAVNLYFLVSIIARQLVIEKHKMVDEVDVYFPVMTFLQFIFYMGWLKVIEVMLNPFGEDDDDFETNALIDRNITMGLKMVDNTMKTPELLKDQFFDEVLVSLLYSEESSQISNYHYHGSTSEVHLEQKCSSVRMIPHSQSEYTLKHMRKQTLSRSVLPDVNENERWKIPTSLEKF.

4 consecutive transmembrane segments (helical) span residues 28-48 (IWKAIYMETIIFLICYGIISV), 73-93 (LSFIPLEFVLGFFVTIVVDRW), 239-259 (LMYPQLVCLAVNLYFLVSIIA), and 275-295 (VYFPVMTFLQFIFYMGWLKVI).

The protein belongs to the anion channel-forming bestrophin (TC 1.A.46) family. Calcium-sensitive chloride channel subfamily. In terms of assembly, forms oligomers.

Its subcellular location is the cell membrane. In terms of biological role, forms chloride channels. The sequence is that of Bestrophin homolog 2 (best-2) from Caenorhabditis elegans.